Reading from the N-terminus, the 213-residue chain is MKIIEVDEELYQYIAAQTQSIGESASDILRRLLNLPTHATSSVDFFESVASAETPKSAVHAEPVLTEKTTEVSQPKVEPVEPPKAVKKQSDEAINHIVDKVRALLNSAEFKEEPKAVVRFLSILRTLYRTNPESFAQATESLQGRTRVYFARDEGTLLVAGNHTKPKQIPDTPYWVITNTNSGRKMLMLEGAMQSMHLPEYLIDEVRPYFVSN.

3 interaction with DNA regions span residues 116–117, 145–149, and 179–185; these read AV, RTRVY, and NTNSGRK.

The protein belongs to the SeqA family. Homodimer. Polymerizes to form helical filaments.

It localises to the cytoplasm. In terms of biological role, negative regulator of replication initiation, which contributes to regulation of DNA replication and ensures that replication initiation occurs exactly once per chromosome per cell cycle. Binds to pairs of hemimethylated GATC sequences in the oriC region, thus preventing assembly of replication proteins and re-initiation at newly replicated origins. Repression is relieved when the region becomes fully methylated. The sequence is that of Negative modulator of initiation of replication from Haemophilus parainfluenzae (strain T3T1).